Consider the following 173-residue polypeptide: Shikimate kinase 1 (173 aa).

ATP is bound at residue 14 to 19 (GAGKST). Ser-18 lines the Mg(2+) pocket. The substrate site is built by Asp-36, Arg-60, and Gly-82. Arg-120 contacts ATP. Arg-140 contacts substrate. An ATP-binding site is contributed by Gln-157.

This sequence belongs to the shikimate kinase family. In terms of assembly, monomer. The cofactor is Mg(2+).

It is found in the cytoplasm. The enzyme catalyses shikimate + ATP = 3-phosphoshikimate + ADP + H(+). The protein operates within metabolic intermediate biosynthesis; chorismate biosynthesis; chorismate from D-erythrose 4-phosphate and phosphoenolpyruvate: step 5/7. Functionally, catalyzes the specific phosphorylation of the 3-hydroxyl group of shikimic acid using ATP as a cosubstrate. The polypeptide is Shikimate kinase 1 (Enterobacter sp. (strain 638)).